The chain runs to 208 residues: EF-hand protein 5 variant 2 (208 aa).

The interval 1–35 is disordered; it reads MQARGTVKVQGDANVDGKMSTGQHPHHQHLNSTQA. 4 consecutive EF-hand domains span residues 64–98, 99–134, 135–170, and 171–206; these read MAEG…HLTE, EEFH…EVDD, TMAD…LAER, and STPE…SRVN. Ca(2+)-binding residues include Glu-118, Asp-123, Asp-148, Thr-152, and Tyr-154.

The polypeptide is EF-hand protein 5 variant 2 (Trypanosoma cruzi).